The primary structure comprises 422 residues: tRNA hydroxylation protein P (422 aa).

A signal peptide spans 1–58 (MNQVELLSPAGNLKKLKIALNYGADAVYGGVSHFSLRNRAGKEFTLETFKEGIDYAHA).

This sequence belongs to the peptidase U32 family.

Functionally, involved in prephenate-dependent formation of 5-hydroxyuridine (ho5U) modification at position 34 in tRNAs, the first step in 5-carboxymethoxyuridine (cmo5U) biosynthesis. This chain is tRNA hydroxylation protein P, found in Helicobacter pylori (strain ATCC 700392 / 26695) (Campylobacter pylori).